The sequence spans 152 residues: Transcriptional regulator MraZ (152 aa).

2 SpoVT-AbrB domains span residues 5 to 52 and 81 to 124; these read ATLV…PLPE and ASEC…DETT.

Belongs to the MraZ family. As to quaternary structure, forms oligomers.

Its subcellular location is the cytoplasm. The protein resides in the nucleoid. In terms of biological role, negatively regulates its own expression and that of the subsequent genes in the proximal part of the division and cell wall (dcw) gene cluster. Acts by binding directly to DNA. May also regulate the expression of genes outside the dcw cluster. The protein is Transcriptional regulator MraZ of Shigella flexneri serotype 5b (strain 8401).